The primary structure comprises 147 residues: MVEWTDKERSIISDIFSHMDYDDIGPKALSRCLIVYPWTQRHFSGFGNLYNAEAIIGNANVAAHGIKVLHGLDRGVKNMDNIAATYADLSTLHSEKLHVDPDNFKLLSDCITIVLAAKMGHAFTAETQGAFQKFLAVVVSALGKQYH.

The Globin domain occupies 3-147; that stretch reads EWTDKERSII…VVSALGKQYH (145 aa). Heme b contacts are provided by His-64 and His-93.

The protein belongs to the globin family. In terms of assembly, hb1 is a heterotetramer of two alpha chains and two beta chains. As to expression, red blood cells.

Functionally, involved in oxygen transport from gills to the various peripheral tissues. This is Hemoglobin subunit beta (hbb) from Trematomus bernacchii (Emerald rockcod).